A 179-amino-acid chain; its full sequence is MAKTAMAYKEKMKELSMLSLICSCFYPEPRNINIYTYDDMEVKQINKRASGQAFELILKPPSPISEAPRTLASPKKKDLSLEEIQKKLEAAEERRKSQEAQVLKQLAEKREHEREVLQKALEENNNFSKMAEEKLILKMEQIKENREANLAAIIERLQEKERHAAEVRRNKELQVELSG.

The interval 1 to 26 (MAKTAMAYKEKMKELSMLSLICSCFY) is membrane attachment. S16 bears the Phosphoserine mark. 2 S-palmitoyl cysteine lipidation sites follow: C22 and C24. An SLD domain is found at 38 to 179 (DDMEVKQINK…NKELQVELSG (142 aa)). The segment at 39 to 96 (DMEVKQINKRASGQAFELILKPPSPISEAPRTLASPKKKDLSLEEIQKKLEAAEERRK) is regulatory/phosphorylation domain. Phosphoserine occurs at positions 50, 62, 73, and 97. A coiled-coil region spans residues 75–179 (KKKDLSLEEI…NKELQVELSG (105 aa)).

Belongs to the stathmin family. Interacts with MAPK8. Interacts with ITM2C. Interacts with KIFBP. Interacts (via the N-terminal region) with CIB1 (via C-terminal region); the interaction is direct, occurs in a calcium-dependent manner and attenuates the neurite outgrowth inhibition of STMN2. Post-translationally, sumoylated. Phosphorylated mostly by MAPK8, but also by MAPK9 and MAPK10 in the developing brain cortex. In terms of processing, N-terminal palmitoylation promotes specific anchoring to the cytosolic leaflet of Golgi membranes and subsequent vesicular trafficking along dendrites and axons. Neuronal Stathmins are substrates for palmitoyltransferases ZDHHC3, ZDHHC7 and ZDHHC15. In terms of tissue distribution, neuron specific.

The protein resides in the cytoplasm. It is found in the perinuclear region. Its subcellular location is the cell projection. It localises to the growth cone. The protein localises to the membrane. The protein resides in the axon. It is found in the golgi apparatus. Its subcellular location is the endosome. It localises to the lamellipodium. In terms of biological role, regulator of microtubule stability. When phosphorylated by MAPK8, stabilizes microtubules and consequently controls neurite length in cortical neurons. In the developing brain, negatively regulates the rate of exit from multipolar stage and retards radial migration from the ventricular zone. This Homo sapiens (Human) protein is Stathmin-2 (STMN2).